The primary structure comprises 239 residues: Probable replication-associated protein repA2 (239 aa).

This sequence belongs to the IncFII RepA family.

Its function is as follows. This protein is essential for plasmid replication; it is involved in copy control functions. The protein is Probable replication-associated protein repA2 (repA2) of Buchnera aphidicola subsp. Baizongia pistaciae (strain Bp).